Reading from the N-terminus, the 219-residue chain is Orotate phosphoribosyltransferase (219 aa).

Lys-26 contributes to the 5-phospho-alpha-D-ribose 1-diphosphate binding site. Residue 34–35 participates in orotate binding; it reads FF. Residues 72–73, Arg-98, Lys-99, Lys-102, His-104, and 124–132 contribute to the 5-phospho-alpha-D-ribose 1-diphosphate site; these read YK and DDVITAGTA. Residues Thr-128 and Arg-156 each coordinate orotate.

The protein belongs to the purine/pyrimidine phosphoribosyltransferase family. PyrE subfamily. As to quaternary structure, homodimer. Requires Mg(2+) as cofactor.

The enzyme catalyses orotidine 5'-phosphate + diphosphate = orotate + 5-phospho-alpha-D-ribose 1-diphosphate. The protein operates within pyrimidine metabolism; UMP biosynthesis via de novo pathway; UMP from orotate: step 1/2. Functionally, catalyzes the transfer of a ribosyl phosphate group from 5-phosphoribose 1-diphosphate to orotate, leading to the formation of orotidine monophosphate (OMP). The chain is Orotate phosphoribosyltransferase from Xanthomonas axonopodis pv. citri (strain 306).